A 146-amino-acid chain; its full sequence is Ribonuclease H (146 aa).

The 141-residue stretch at 1–141 (MEKIDIFTDG…ADALANRGVE (141 aa)) folds into the RNase H type-1 domain. Residues D9, E47, D69, and D133 each coordinate Mg(2+).

The protein belongs to the RNase H family. Monomer. It depends on Mg(2+) as a cofactor.

The protein resides in the cytoplasm. It carries out the reaction Endonucleolytic cleavage to 5'-phosphomonoester.. In terms of biological role, endonuclease that specifically degrades the RNA of RNA-DNA hybrids. In Herminiimonas arsenicoxydans, this protein is Ribonuclease H.